Here is a 512-residue protein sequence, read N- to C-terminus: Transactivator/viroplasmin protein (512 aa).

2 disordered regions span residues 76 to 123 (GNER…NPVA) and 474 to 512 (ADSS…IPSI). The span at 476 to 487 (SSSTSGEQNNVE) shows a compositional bias: polar residues. The span at 499–512 (YDERSDDHKRIPSI) shows a compositional bias: basic and acidic residues.

This sequence belongs to the caulimoviridae viroplasmin family.

It is found in the host cytoplasm. Enhances the translation of downstream ORFs on polycistronic mRNAs derived from figwort mosaic virus. This is Transactivator/viroplasmin protein from Figwort mosaic virus (strain DxS) (FMV).